The following is a 316-amino-acid chain: Cytochrome c oxidase assembly protein COX18, mitochondrial (316 aa).

Residues 164 to 184 (WKNALLPMVQIPLWVTVSMGI) form a helical membrane-spanning segment. At 185–213 (RTLTETQLIESFYPSWFSALGFSSFDLSS) the chain is on the mitochondrial matrix side. The chain crosses the membrane as a helical span at residues 214-234 (PLVAMPLLAPILVGTLAVLNV). Residues 235–274 (ELNGRLMFSSSLSSQGIKTISRNSTRVQEAMTSILNVSRL) lie on the Mitochondrial intermembrane side of the membrane. Residues 275-295 (GCVVMLAMSSQAPFLLSLYWI) form a helical membrane-spanning segment. Topologically, residues 296 to 316 (SSQLFSLVQNIILNWIYPYQR) are mitochondrial matrix.

This sequence belongs to the OXA1/ALB3/YidC family. In terms of assembly, interacts with PNT1 and MSS2.

The protein localises to the mitochondrion inner membrane. Required for the insertion of integral membrane proteins into the mitochondrial inner membrane. Essential for the activity and assembly of cytochrome c oxidase. Plays a central role in the translocation and export of the C-terminal part of the COX2 protein into the mitochondrial intermembrane space. This chain is Cytochrome c oxidase assembly protein COX18, mitochondrial (COX18), found in Saccharomyces cerevisiae (strain ATCC 204508 / S288c) (Baker's yeast).